The sequence spans 636 residues: 1-deoxy-D-xylulose-5-phosphate synthase (636 aa).

Residues His-74 and Gly-115–Ala-117 each bind thiamine diphosphate. Asp-146 lines the Mg(2+) pocket. Thiamine diphosphate is bound by residues Gly-147–Ala-148, Asn-175, Tyr-285, and Glu-368. Position 175 (Asn-175) interacts with Mg(2+).

The protein belongs to the transketolase family. DXPS subfamily. Homodimer. Requires Mg(2+) as cofactor. It depends on thiamine diphosphate as a cofactor.

The catalysed reaction is D-glyceraldehyde 3-phosphate + pyruvate + H(+) = 1-deoxy-D-xylulose 5-phosphate + CO2. It participates in metabolic intermediate biosynthesis; 1-deoxy-D-xylulose 5-phosphate biosynthesis; 1-deoxy-D-xylulose 5-phosphate from D-glyceraldehyde 3-phosphate and pyruvate: step 1/1. Catalyzes the acyloin condensation reaction between C atoms 2 and 3 of pyruvate and glyceraldehyde 3-phosphate to yield 1-deoxy-D-xylulose-5-phosphate (DXP). This chain is 1-deoxy-D-xylulose-5-phosphate synthase, found in Anaeromyxobacter sp. (strain K).